The following is a 405-amino-acid chain: Arginine biosynthesis bifunctional protein ArgJ (405 aa).

Thr-152, Lys-178, Thr-189, Glu-276, Asn-400, and Thr-405 together coordinate substrate. The active-site Nucleophile is the Thr-189.

The protein belongs to the ArgJ family. In terms of assembly, heterotetramer of two alpha and two beta chains.

The protein localises to the cytoplasm. The enzyme catalyses N(2)-acetyl-L-ornithine + L-glutamate = N-acetyl-L-glutamate + L-ornithine. It catalyses the reaction L-glutamate + acetyl-CoA = N-acetyl-L-glutamate + CoA + H(+). The protein operates within amino-acid biosynthesis; L-arginine biosynthesis; L-ornithine and N-acetyl-L-glutamate from L-glutamate and N(2)-acetyl-L-ornithine (cyclic): step 1/1. It functions in the pathway amino-acid biosynthesis; L-arginine biosynthesis; N(2)-acetyl-L-ornithine from L-glutamate: step 1/4. Functionally, catalyzes two activities which are involved in the cyclic version of arginine biosynthesis: the synthesis of N-acetylglutamate from glutamate and acetyl-CoA as the acetyl donor, and of ornithine by transacetylation between N(2)-acetylornithine and glutamate. This chain is Arginine biosynthesis bifunctional protein ArgJ, found in Pseudomonas syringae pv. syringae (strain B728a).